The sequence spans 478 residues: Protein nucleotidyltransferase YdiU (478 aa).

ATP-binding residues include Gly84, Gly86, Arg87, Lys107, Asp119, Gly120, Arg170, and Arg177. Asp246 (proton acceptor) is an active-site residue. Mg(2+) contacts are provided by Asn247 and Asp256. Asp256 contributes to the ATP binding site.

The protein belongs to the SELO family. It depends on Mg(2+) as a cofactor. The cofactor is Mn(2+).

It catalyses the reaction L-seryl-[protein] + ATP = 3-O-(5'-adenylyl)-L-seryl-[protein] + diphosphate. The catalysed reaction is L-threonyl-[protein] + ATP = 3-O-(5'-adenylyl)-L-threonyl-[protein] + diphosphate. The enzyme catalyses L-tyrosyl-[protein] + ATP = O-(5'-adenylyl)-L-tyrosyl-[protein] + diphosphate. It carries out the reaction L-histidyl-[protein] + UTP = N(tele)-(5'-uridylyl)-L-histidyl-[protein] + diphosphate. It catalyses the reaction L-seryl-[protein] + UTP = O-(5'-uridylyl)-L-seryl-[protein] + diphosphate. The catalysed reaction is L-tyrosyl-[protein] + UTP = O-(5'-uridylyl)-L-tyrosyl-[protein] + diphosphate. In terms of biological role, nucleotidyltransferase involved in the post-translational modification of proteins. It can catalyze the addition of adenosine monophosphate (AMP) or uridine monophosphate (UMP) to a protein, resulting in modifications known as AMPylation and UMPylation. This is Protein nucleotidyltransferase YdiU from Escherichia coli (strain SE11).